The chain runs to 222 residues: Ras-related protein Rab-21 (222 aa).

Alanine 2 bears the N-acetylalanine mark. Residues glycine 25, glycine 28, lysine 29, threonine 30, serine 31, asparagine 42, aspartate 43, histidine 45, threonine 47, and threonine 48 each coordinate GTP. Threonine 30 contacts Mg(2+). A Switch 1 motif is present at residues 40-53 (KFNDKHITTLQASF). The Mg(2+) site is built by threonine 48 and aspartate 71. A Switch 2 motif is present at residues 73–91 (AGQERFHALGPIYYRDSNG). Positions 74, 129, 130, 132, 160, and 161 each coordinate GTP. Residues cysteine 218 and cysteine 219 are each lipidated (S-geranylgeranyl cysteine). Cysteine 219 is modified (cysteine methyl ester). Residues 220 to 222 (SSG) constitute a propeptide, removed in mature form.

Belongs to the small GTPase superfamily. Rab family. As to quaternary structure, interacts with the cytoplasmic tail of integrins ITGA1, ITGA2, ITGA5, ITGA6, ITGA11 and ITGB1; this interaction is dependent upon its GDP/GTP cycle. Interacts with RABGEF1 (via VPS9 domain). Interacts with ANKRD27. Interacts (in GTP-bound form) with VAMP8 in response to starvation; the interaction probably regulates VAMP8 endolysosomal trafficking. Interacts (active GTP-bound form) with TMED10; the interaction is indirect and regulates TMED10 abundance and localization at the Golgi. Mg(2+) is required as a cofactor.

It is found in the endoplasmic reticulum membrane. The protein resides in the golgi apparatus. It localises to the trans-Golgi network. The protein localises to the golgi apparatus membrane. Its subcellular location is the early endosome membrane. It is found in the cytoplasmic vesicle membrane. The protein resides in the cleavage furrow. It localises to the cell projection. The protein localises to the neuron projection. The catalysed reaction is GTP + H2O = GDP + phosphate + H(+). Its activity is regulated as follows. Regulated by guanine nucleotide exchange factors (GEFs) including ANKRD27 and RABGEF1, which promote the exchange of bound GDP for free GTP. Regulated by GTPase activating proteins (GAPs) which increase the GTP hydrolysis activity. Inhibited by GDP dissociation inhibitors (GDIs). Its function is as follows. The small GTPases Rab are key regulators of intracellular membrane trafficking, from the formation of transport vesicles to their fusion with membranes. Rabs cycle between an inactive GDP-bound form and an active GTP-bound form that is able to recruit to membranes different sets of downstream effectors directly responsible for vesicle formation, movement, tethering and fusion. RAB21 is involved in membrane trafficking control. Regulates integrin internalization and recycling, but does not influence the traffic of endosomally translocated receptors in general. As a result, may regulate cell adhesion and migration. During the mitosis of adherent cells, controls the endosomal trafficking of integrins which is required for the successful completion of cytokinesis. Involved in neurite growth. Following SBF2/MTMT13-mediated activation in response to starvation-induced autophagy, binds to and regulates SNARE protein VAMP8 endolysosomal transport required for SNARE-mediated autophagosome-lysosome fusion. Modulates protein levels of the cargo receptors TMED2 and TMED10, and required for appropriate Golgi localization of TMED10. The chain is Ras-related protein Rab-21 (RAB21) from Bos taurus (Bovine).